The chain runs to 25 residues: Growth-blocking peptide (25 aa).

The cysteines at positions 7 and 19 are disulfide-linked. Gln25 is modified (glutamine amide).

It belongs to the GBP/PSP1/paralytic peptide family. In terms of tissue distribution, hemolymph.

Its function is as follows. Biogenic peptide that prevents, in lepidopteran, the onset of metamorphosis from larva to pupa. This growth-blocking peptide has repressive activity against juvenile hormone esterase. This chain is Growth-blocking peptide, found in Cotesia kariyai (Parasitic wasp).